Here is a 567-residue protein sequence, read N- to C-terminus: TPR repeat-containing protein MJ1428 (567 aa).

TPR repeat units follow at residues 14–47 (YEDWVTEANYYLDEGIYDKAVECYLKALEKKNTN), 48–81 (PIDWFNLAYALYHLEKYDSALEAINEALKISPSN), 83–115 (YFAYLKGLIHYKRGEIILAYKYLKKASEKIKNE), 116–148 (ELFEILGDISVKYGRYEEALKYYLKSYKMANSK), 150–183 (LNALFKAGKIYLLFGDIDKAYDAFNEILQQNPSH), 199–234 (INSYEDLNNGLTMIKNKDYIGALKIFNKVLQIDENS), 236–268 (ISYYYKSVIAEIFEEYKKALEYIDKSISIFNRS), 269–301 (LYYAKKGDILYKLGDEEGAIEAYNKAIKLNSQN), 303–335 (YAYFGLAILYYRKGELEKSSNFFDKVLETYLEE), 344–379 (LNLYSLIGKAETTGIPKYYHEAMKYVDNLINLENSS), 380–412 (RWWYVKGYIYYKLGNYKDAYESFMNALRVNPKD), 414–446 (STLKSLAIVLEKSGKIDEAITTYTKILKIVNSL), and 505–538 (AYIYLSFIESYISLDEISQMVNDIKSKLSLEMYR).

The chain is TPR repeat-containing protein MJ1428 from Methanocaldococcus jannaschii (strain ATCC 43067 / DSM 2661 / JAL-1 / JCM 10045 / NBRC 100440) (Methanococcus jannaschii).